The following is an 861-amino-acid chain: Oleate activated transcription factor 3 (861 aa).

A DNA-binding region (zn(2)-C6 fungal-type) is located at residues 19 to 47 (NCKKRKSKCDRTKPCGTCVRLGDVDSCVY). Polar residues predominate over residues 52 to 61 (SGQPESSPSL). Positions 52-99 (SGQPESSPSLNDADPLRKQSTPAERISPGFIKKRRSSQTRQDEDHWQR) are disordered.

Belongs to the OAF3 family.

It localises to the cytoplasm. Its subcellular location is the nucleus. It is found in the mitochondrion. Functionally, transcriptional inhibitor with a significantly increased number of target genes in response to oleate. In Saccharomyces cerevisiae (strain JAY291) (Baker's yeast), this protein is Oleate activated transcription factor 3 (OAF3).